Consider the following 167-residue polypeptide: Leukotoxin-activating lysine-acyltransferase LktC serotype T3 (167 aa).

Catalysis depends on residues H22 and D91.

This sequence belongs to the RTX toxin acyltransferase family.

The protein localises to the cytoplasm. The catalysed reaction is a fatty acyl-[ACP] + L-lysyl-[protein] = N(6)-(fatty acyl)-L-lysyl-[protein] + holo-[ACP] + H(+). Its function is as follows. Involved in fatty acylation of the protoxin (LktA) at two internal lysine residues, thereby converting it to the active toxin. In Mannheimia haemolytica (Pasteurella haemolytica), this protein is Leukotoxin-activating lysine-acyltransferase LktC serotype T3 (lktC).